Reading from the N-terminus, the 324-residue chain is Fructose-1,6-bisphosphatase class 1 (324 aa).

Mg(2+) is bound by residues E88, D107, L109, and D110. Substrate is bound by residues 110–113 (DGSS), N199, and K265. Residue E271 participates in Mg(2+) binding.

It belongs to the FBPase class 1 family. As to quaternary structure, homotetramer. Requires Mg(2+) as cofactor.

It localises to the cytoplasm. It carries out the reaction beta-D-fructose 1,6-bisphosphate + H2O = beta-D-fructose 6-phosphate + phosphate. The protein operates within carbohydrate biosynthesis; gluconeogenesis. The polypeptide is Fructose-1,6-bisphosphatase class 1 (Neisseria meningitidis serogroup A / serotype 4A (strain DSM 15465 / Z2491)).